A 118-amino-acid chain; its full sequence is Probable dihydroneopterin aldolase (118 aa).

Residues Glu21, Tyr53, and 72–73 each bind substrate; that span reads IE. Catalysis depends on Lys98, which acts as the Proton donor/acceptor.

It belongs to the DHNA family.

The catalysed reaction is 7,8-dihydroneopterin = 6-hydroxymethyl-7,8-dihydropterin + glycolaldehyde. Its pathway is cofactor biosynthesis; tetrahydrofolate biosynthesis; 2-amino-4-hydroxy-6-hydroxymethyl-7,8-dihydropteridine diphosphate from 7,8-dihydroneopterin triphosphate: step 3/4. Its function is as follows. Catalyzes the conversion of 7,8-dihydroneopterin to 6-hydroxymethyl-7,8-dihydropterin. The chain is Probable dihydroneopterin aldolase (folB) from Synechocystis sp. (strain ATCC 27184 / PCC 6803 / Kazusa).